Reading from the N-terminus, the 155-residue chain is Deoxyuridine 5'-triphosphate nucleotidohydrolase (155 aa).

Residues 74-76, Asn87, and 91-93 contribute to the substrate site; these read RSG and LID.

This sequence belongs to the dUTPase family. The cofactor is Mg(2+).

The enzyme catalyses dUTP + H2O = dUMP + diphosphate + H(+). The protein operates within pyrimidine metabolism; dUMP biosynthesis; dUMP from dCTP (dUTP route): step 2/2. Its function is as follows. This enzyme is involved in nucleotide metabolism: it produces dUMP, the immediate precursor of thymidine nucleotides and it decreases the intracellular concentration of dUTP so that uracil cannot be incorporated into DNA. In Xylella fastidiosa (strain M23), this protein is Deoxyuridine 5'-triphosphate nucleotidohydrolase.